A 231-amino-acid chain; its full sequence is Uracil-DNA glycosylase (231 aa).

Asp-71 acts as the Proton acceptor in catalysis.

This sequence belongs to the uracil-DNA glycosylase (UDG) superfamily. UNG family.

The protein resides in the cytoplasm. It catalyses the reaction Hydrolyzes single-stranded DNA or mismatched double-stranded DNA and polynucleotides, releasing free uracil.. Its function is as follows. Excises uracil residues from the DNA which can arise as a result of misincorporation of dUMP residues by DNA polymerase or due to deamination of cytosine. The sequence is that of Uracil-DNA glycosylase from Pseudomonas aeruginosa (strain UCBPP-PA14).